A 519-amino-acid polypeptide reads, in one-letter code: Histidine ammonia-lyase (519 aa).

The 5-imidazolinone (Ala-Gly) cross-link spans 146 to 148; the sequence is ASG. Serine 147 bears the 2,3-didehydroalanine (Ser) mark.

The protein belongs to the PAL/histidase family. In terms of processing, contains an active site 4-methylidene-imidazol-5-one (MIO), which is formed autocatalytically by cyclization and dehydration of residues Ala-Ser-Gly.

It is found in the cytoplasm. The catalysed reaction is L-histidine = trans-urocanate + NH4(+). It participates in amino-acid degradation; L-histidine degradation into L-glutamate; N-formimidoyl-L-glutamate from L-histidine: step 1/3. This is Histidine ammonia-lyase from Psychrobacter sp. (strain PRwf-1).